The chain runs to 353 residues: N-acetyl-gamma-glutamyl-phosphate reductase (353 aa).

The active site involves Cys-155.

This sequence belongs to the NAGSA dehydrogenase family. Type 1 subfamily.

It is found in the cytoplasm. The enzyme catalyses N-acetyl-L-glutamate 5-semialdehyde + phosphate + NADP(+) = N-acetyl-L-glutamyl 5-phosphate + NADPH + H(+). The protein operates within amino-acid biosynthesis; L-arginine biosynthesis; N(2)-acetyl-L-ornithine from L-glutamate: step 3/4. In terms of biological role, catalyzes the NADPH-dependent reduction of N-acetyl-5-glutamyl phosphate to yield N-acetyl-L-glutamate 5-semialdehyde. The sequence is that of N-acetyl-gamma-glutamyl-phosphate reductase from Microcystis aeruginosa (strain NIES-843 / IAM M-2473).